The chain runs to 216 residues: Uracil phosphoribosyltransferase (216 aa).

5-phospho-alpha-D-ribose 1-diphosphate-binding positions include Arg85, Arg110, and 135–143; that span reads DPMVATGYS. Uracil is bound by residues Ile200 and 205-207; that span reads GDA. A 5-phospho-alpha-D-ribose 1-diphosphate-binding site is contributed by Asp206.

It belongs to the UPRTase family. It depends on Mg(2+) as a cofactor.

It catalyses the reaction UMP + diphosphate = 5-phospho-alpha-D-ribose 1-diphosphate + uracil. Its pathway is pyrimidine metabolism; UMP biosynthesis via salvage pathway; UMP from uracil: step 1/1. Its activity is regulated as follows. Allosterically activated by GTP. In terms of biological role, catalyzes the conversion of uracil and 5-phospho-alpha-D-ribose 1-diphosphate (PRPP) to UMP and diphosphate. The protein is Uracil phosphoribosyltransferase of Ralstonia pickettii (strain 12J).